The chain runs to 71 residues: Large ribosomal subunit protein bL31 (71 aa).

Zn(2+)-binding residues include Cys16, Cys18, Cys37, and Cys40.

The protein belongs to the bacterial ribosomal protein bL31 family. Type A subfamily. Part of the 50S ribosomal subunit. It depends on Zn(2+) as a cofactor.

Its function is as follows. Binds the 23S rRNA. This chain is Large ribosomal subunit protein bL31, found in Pseudomonas aeruginosa (strain LESB58).